A 327-amino-acid chain; its full sequence is L-serine dehydratase/L-threonine deaminase (327 aa).

Alanine 2 carries the N-acetylalanine modification. At lysine 41 the chain carries N6-(pyridoxal phosphate)lysine. Residue proline 128 coordinates pyridoxal 5'-phosphate.

This sequence belongs to the serine/threonine dehydratase family. As to quaternary structure, homodimer. Pyridoxal 5'-phosphate serves as cofactor.

It localises to the cytoplasm. It catalyses the reaction L-serine = pyruvate + NH4(+). The catalysed reaction is L-threonine = 2-oxobutanoate + NH4(+). Its pathway is carbohydrate biosynthesis; gluconeogenesis. In terms of biological role, catalyzes the pyridoxal-phosphate-dependent dehydrative deamination of L-threonine and L-serine to ammonia and alpha-ketobutyrate and pyruvate, respectively. This chain is L-serine dehydratase/L-threonine deaminase (Sds), found in Mus musculus (Mouse).